The sequence spans 365 residues: PHD finger protein 6 (365 aa).

N-acetylserine is present on S2. Short sequence motifs (nuclear localization signal) lie at residues 13-16 (RQRK) and 129-133 (RKHKK). The segment at 14-52 (QRKCGFCKSNRDKECGQLLISENQKVAAHHKCMLFSSAL) adopts a C2HC pre-PHD-type 1 zinc-finger fold. Residues 14 to 132 (QRKCGFCKSN…IYMVYCRKHK (119 aa)) are extended PHD1 domain (ePHD1). A PHD-type 1 zinc finger spans residues 80-132 (LMCSLCHCPGATIGCDVKTCHRTYHYHCALHDKAQIREKPSQGIYMVYCRKHK). Residues S138, S145, and S155 each carry the phosphoserine modification. The segment at 139–211 (EADLEESFNE…RSSPSDTRPK (73 aa)) is disordered. The Nucleolar localization signal signature appears at 157-169 (KSKKKSRKGRPRK). Over residues 157–171 (KSKKKSRKGRPRKTN) the composition is skewed to basic residues. A Glycyl lysine isopeptide (Lys-Gly) (interchain with G-Cter in SUMO2) cross-link involves residue K173. S183 and S199 each carry phosphoserine. A C2HC pre-PHD-type 2 zinc finger spans residues 209 to 249 (RPKCGFCHVGEEENQARGKLHIFNAKKAAAHYKCMLFSSGT). Residues 209 to 330 (RPKCGFCHVG…IYKLYCKNHS (122 aa)) are extended PHD2 domain (ePHD2). A Glycyl lysine isopeptide (Lys-Gly) (interchain with G-Cter in SUMO2) cross-link involves residue K227. The PHD-type 2 zinc finger occupies 278–330 (MKCTLCSQPGATIGCEIKACVKTYHYHCGVQDKAKYIENMSRGIYKLYCKNHS). Positions 330 to 365 (SGNDERDEEDEERESKSRGKVEIDQQQLTQQQLNGN) are disordered. Over residues 342 to 352 (RESKSRGKVEI) the composition is skewed to basic and acidic residues. The segment covering 354–365 (QQQLTQQQLNGN) has biased composition (low complexity). A Phosphothreonine modification is found at T358.

In terms of assembly, interacts with UBTF. Interacts with the NuRD complex component RBBP4 (via the nucleolar localization motif), the interaction mediates transcriptional repression activity.

It localises to the nucleus. The protein localises to the nucleolus. The protein resides in the chromosome. Its subcellular location is the centromere. It is found in the kinetochore. In terms of biological role, transcriptional regulator that associates with ribosomal RNA promoters and suppresses ribosomal RNA (rRNA) transcription. This Bos taurus (Bovine) protein is PHD finger protein 6 (PHF6).